Consider the following 151-residue polypeptide: Putative pre-16S rRNA nuclease (151 aa).

This sequence belongs to the YqgF nuclease family.

Its subcellular location is the cytoplasm. Functionally, could be a nuclease involved in processing of the 5'-end of pre-16S rRNA. This Nostoc sp. (strain PCC 7120 / SAG 25.82 / UTEX 2576) protein is Putative pre-16S rRNA nuclease.